We begin with the raw amino-acid sequence, 243 residues long: Uridylate kinase (243 aa).

Position 15-18 (15-18 (KLSG)) interacts with ATP. Positions 23–28 (GEEGFG) are involved in allosteric activation by GTP. Position 57 (G57) interacts with UMP. ATP-binding residues include G58 and R62. UMP contacts are provided by residues D77 and 138–145 (TGNPFFTT). ATP is bound by residues T165, F171, and D174.

It belongs to the UMP kinase family. Homohexamer.

Its subcellular location is the cytoplasm. The enzyme catalyses UMP + ATP = UDP + ADP. It participates in pyrimidine metabolism; CTP biosynthesis via de novo pathway; UDP from UMP (UMPK route): step 1/1. With respect to regulation, allosterically activated by GTP. Inhibited by UTP. Catalyzes the reversible phosphorylation of UMP to UDP. In Vibrio campbellii (strain ATCC BAA-1116), this protein is Uridylate kinase.